A 464-amino-acid polypeptide reads, in one-letter code: MAASFKALPQQLTLTRSFARCYSVSAESIPAAKKKYVPTEGSYPQGFQASGILVGVKPGNKTKPDLAFLTSDRPCAAAAVFTKNKFQAAPVTFSRDLLKRRGNRGIRGVLINSGCANAVTGKGGLEDASLMAKAADEQLGGEDGAGSSTIVMSTGVIGQRLPIDKIVGNVGAAHGALGSGHKDWLACATAICTTDTFPKLMSRTFSLPSSPGVEYRMAGMTKGAGMIHPNMATLLGVVATDAPIAPGVMPSVLKHAVDRSFNSITIDGDTSTNDTVALLANGAAGGQEISSVDSPDYAAFQTVLSDFSADLAKLIVRDGEGATKFVTIRVVDSASEEAARKVASTIARSPLVKTALYGRDANWGRILCATGYALISEPGQDINEVASIVSEKTNVSFVPTDGSAELKLLVNGEPETVDEARASEILELEDLEILVKLGTGDKQATYWTCDYSHEYITINGDYRT.

A mitochondrion-targeting transit peptide spans 1-22 (MAASFKALPQQLTLTRSFARCY). The substrate site is built by threonine 193, lysine 222, threonine 233, glutamate 320, asparagine 459, and threonine 464. The Nucleophile role is filled by threonine 233.

This sequence belongs to the ArgJ family. As to quaternary structure, heterodimer of an alpha and a beta chain. The alpha and beta chains are autoproteolytically processed from a single precursor protein within the mitochondrion.

Its subcellular location is the mitochondrion matrix. It catalyses the reaction N(2)-acetyl-L-ornithine + L-glutamate = N-acetyl-L-glutamate + L-ornithine. The enzyme catalyses L-glutamate + acetyl-CoA = N-acetyl-L-glutamate + CoA + H(+). Its pathway is amino-acid biosynthesis; L-arginine biosynthesis; L-ornithine and N-acetyl-L-glutamate from L-glutamate and N(2)-acetyl-L-ornithine (cyclic): step 1/1. It participates in amino-acid biosynthesis; L-arginine biosynthesis; N(2)-acetyl-L-ornithine from L-glutamate: step 1/4. Its function is as follows. Catalyzes two activities which are involved in the cyclic version of arginine biosynthesis: the synthesis of acetylglutamate from glutamate and acetyl-CoA, and of ornithine by transacetylation between acetylornithine and glutamate. In Verticillium alfalfae (strain VaMs.102 / ATCC MYA-4576 / FGSC 10136) (Verticillium wilt of alfalfa), this protein is Arginine biosynthesis bifunctional protein ArgJ, mitochondrial.